The primary structure comprises 105 residues: Secreted RxLR effector protein 158 (105 aa).

Positions 1–22 (MRGAHYVAIVLLVAAGGQTAAG) are cleaved as a signal peptide. The short motif at 50–71 (RALQASRNPKDDLMFSAGDEER) is the RxLR-dEER element.

This sequence belongs to the RxLR effector family.

Its subcellular location is the secreted. It localises to the host nucleus. The protein resides in the host cytoplasm. In terms of biological role, secreted effector that partially suppresses the host cell death induced by cell death-inducing proteins. The polypeptide is Secreted RxLR effector protein 158 (Plasmopara viticola (Downy mildew of grapevine)).